The sequence spans 545 residues: Protein disulfide isomerase-like 1-3 (545 aa).

The segment covering 1–16 (MWPRAPATPPPPPWPS) has biased composition (pro residues). Positions 1–24 (MWPRAPATPPPPPWPSKPSAASRS) are disordered. Residues 55-189 (ASSTAFAAAF…IVAYLKRQAG (135 aa)) enclose the Thioredoxin 1 domain. Asparagine 87 carries N-linked (GlcNAc...) asparagine glycosylation. Active-site nucleophile residues include cysteine 107 and cysteine 110. A disulfide bond links cysteine 107 and cysteine 110. Asparagine 349 carries an N-linked (GlcNAc...) asparagine glycan. The region spanning 403–545 (FTEGTLAPHV…TTTESVKDEL (143 aa)) is the Thioredoxin 2 domain. Active-site nucleophile residues include cysteine 453 and cysteine 456. Residues cysteine 453 and cysteine 456 are joined by a disulfide bond. The Prevents secretion from ER motif lies at 542–545 (KDEL).

The protein belongs to the protein disulfide isomerase family.

The protein resides in the endoplasmic reticulum lumen. The enzyme catalyses Catalyzes the rearrangement of -S-S- bonds in proteins.. Acts as a protein-folding catalyst that interacts with nascent polypeptides to catalyze the formation, isomerization, and reduction or oxidation of disulfide bonds. May play a role in storage protein biogenesis. The protein is Protein disulfide isomerase-like 1-3 (PDIL1-3) of Oryza sativa subsp. japonica (Rice).